The primary structure comprises 897 residues: High molecular weight rhoptry protein 3 (897 aa).

The signal sequence occupies residues 1 to 24; that stretch reads MRSKHLVTLFIITFLSFSTVKVWG. Cystine bridges form between C157–C231, C244–C253, C262–C276, C421–C620, and C475–C536. The chain crosses the membrane as a helical span at residues 597–615; sequence FVLYFISIISVLYINEYYY. Disordered stretches follow at residues 788-845 and 859-897; these read KEQS…SNLK and QLDKEKPKKKKSKRKKKRDSSSDRILLEESKTFTSENEL. The span at 792–801 shows a compositional bias: polar residues; that stretch reads KSTSAASTSD. Positions 802 to 817 are enriched in low complexity; that stretch reads EISGSEGPSTESTSTG. A Phosphoserine; by CDPK1 modification is found at S804. Over residues 820–832 the composition is skewed to basic and acidic residues; that stretch reads GEDKTTDNTYKEM. A compositionally biased stretch (basic residues) spans 865 to 876; that stretch reads PKKKKSKRKKKR. The span at 877–889 shows a compositional bias: basic and acidic residues; the sequence is DSSSDRILLEESK.

Component of the RhopH complex. RhopH complex is composed of CLAG3.1/CLAG3.2, RhopH2 and RhopH3 with a 1:1:1 subunit stoichiometry. Interacts with CLAG3.1/CLAG3.2. Interacts with CDPK1; the interaction promotes RhopH3 phosphorylation in merozoites. Post-translationally, proteolytically cleaved near C-terminus.

It is found in the host cell membrane. The protein localises to the parasitophorous vacuole membrane. Its subcellular location is the cytoplasm. It localises to the cytoplasmic vesicle. The protein resides in the secretory vesicle. It is found in the rhoptry. In terms of biological role, participates in the formation of new permeability pathways in Plasmodium-infected erythrocytes enabling the uptake of nutrients from the blood plasma. Required for maintaining invasion capacity of merozoites. Required for the trophozoite to schizont developmental transition of the intracellular parasite. This Plasmodium falciparum (isolate 3D7) protein is High molecular weight rhoptry protein 3.